Reading from the N-terminus, the 810-residue chain is RING finger protein unkempt homolog (810 aa).

Residues 1–24 are disordered; that stretch reads MSKGPGPGGSAASSAPPAATAQVL. The segment covering 10 to 19 has biased composition (low complexity); that stretch reads SAASSAPPAA. 5 consecutive C3H1-type zinc fingers follow at residues 84-113, 124-154, 215-241, 251-285, and 293-321; these read YSPD…HRTT, YYKT…HGPH, NYKT…HNSK, KYRS…HTRT, and IYKS…HVEQ. The segment at 239 to 265 is disordered; it reads NSKDRRRSPRKHKYRSSPCPNVKHGDE. Ser-240 bears the Phosphoserine mark. A compositionally biased stretch (basic residues) spans 241–253; the sequence is KDRRRSPRKHKYR. A disordered region spans residues 324-343; that stretch reads LSDDLQPSSTVSSPTQPGPV. The segment covering 329–343 has biased composition (low complexity); the sequence is QPSSTVSSPTQPGPV. Phosphoserine is present on residues Ser-374, Ser-378, and Ser-385. The span at 569 to 585 shows a compositional bias: low complexity; that stretch reads SASFHSASPSPPVSLSS. The segment at 569-602 is disordered; sequence SASFHSASPSPPVSLSSHFLQQPQGHLSQSENTF. Over residues 586-602 the composition is skewed to polar residues; sequence HFLQQPQGHLSQSENTF. The residue at position 631 (Ser-631) is a Phosphoserine. A coiled-coil region spans residues 643 to 723; the sequence is GAAELARLRQ…QEELERLHSG (81 aa). Residues 766 to 801 form an RING-type; degenerate zinc finger; it reads SVKCLKCQEQNRAVLPCQHAVLCELCAEGSECPVCQ.

Belongs to the unkempt family.

Its subcellular location is the cytoplasm. In terms of biological role, sequence-specific RNA-binding protein which plays an important role in the establishment and maintenance of the early morphology of cortical neurons during embryonic development. Acts as a translation repressor and controls a translationally regulated cell morphology program to ensure proper structuring of the nervous system. Translational control depends on recognition of its binding element within target mRNAs which consists of a mandatory UAG trimer upstream of a U/A-rich motif. Associated with polysomes. The sequence is that of RING finger protein unkempt homolog (UNK) from Canis lupus familiaris (Dog).